We begin with the raw amino-acid sequence, 338 residues long: tRNA N6-adenosine threonylcarbamoyltransferase (338 aa).

Fe cation-binding residues include H110 and H114. Residues 132 to 136, D165, G178, and N274 each bind substrate; that span reads LLSGG. Fe cation is bound at residue D298.

Belongs to the KAE1 / TsaD family. Fe(2+) serves as cofactor.

Its subcellular location is the cytoplasm. It carries out the reaction L-threonylcarbamoyladenylate + adenosine(37) in tRNA = N(6)-L-threonylcarbamoyladenosine(37) in tRNA + AMP + H(+). Required for the formation of a threonylcarbamoyl group on adenosine at position 37 (t(6)A37) in tRNAs that read codons beginning with adenine. Is involved in the transfer of the threonylcarbamoyl moiety of threonylcarbamoyl-AMP (TC-AMP) to the N6 group of A37, together with TsaE and TsaB. TsaD likely plays a direct catalytic role in this reaction. This chain is tRNA N6-adenosine threonylcarbamoyltransferase, found in Borrelia garinii subsp. bavariensis (strain ATCC BAA-2496 / DSM 23469 / PBi) (Borreliella bavariensis).